Consider the following 254-residue polypeptide: Alcohol dehydrogenase 2 (254 aa).

10–33 (FVAGLGGIGLDTSREIVKSGPKNL) contacts NAD(+). Ser-138 lines the substrate pocket. Tyr-151 (proton acceptor) is an active-site residue.

It belongs to the short-chain dehydrogenases/reductases (SDR) family. Homodimer.

The catalysed reaction is a primary alcohol + NAD(+) = an aldehyde + NADH + H(+). It catalyses the reaction a secondary alcohol + NAD(+) = a ketone + NADH + H(+). The polypeptide is Alcohol dehydrogenase 2 (Adh2) (Drosophila montana (Fruit fly)).